Consider the following 428-residue polypeptide: Sulfhydrogenase 1 subunit alpha (428 aa).

Positions 65, 68, 418, and 421 each coordinate Ni(2+). Cys68 provides a ligand contact to Fe cation. Cys421 serves as a coordination point for Fe cation.

It belongs to the [NiFe]/[NiFeSe] hydrogenase large subunit family. As to quaternary structure, heterotetramer of alpha, beta, gamma and delta subunits. The nickel-containing alpha and delta subunits constitute the hydrogenase activity. The beta and gamma subunits (flavin-containing dimer) constitute the sulfur reductase activity. Requires Ni(2+) as cofactor. Fe cation is required as a cofactor.

The protein localises to the cytoplasm. The enzyme catalyses H2 + NADP(+) = NADPH + H(+). In terms of biological role, part of a bifunctional enzyme complex that functions as an NADPH-dependent hydrogen-evolving hydrogenase with sulfur-reducing activity. May play a role in hydrogen cycling during fermentative growth. Activity not exhibited with NAD. The alpha and delta subunits form the hydrogenase component that catalyzes the reduction of protons to evolve hydrogen. This chain is Sulfhydrogenase 1 subunit alpha, found in Pyrococcus furiosus (strain ATCC 43587 / DSM 3638 / JCM 8422 / Vc1).